Reading from the N-terminus, the 261-residue chain is Short-chain dehydrogenase/reductase AFUA_1G00990 (261 aa).

NADP(+) contacts are provided by Leu19, Asp67, Asn94, Tyr169, Lys173, and Thr213. Tyr169 functions as the Proton donor in the catalytic mechanism. Catalysis depends on Lys173, which acts as the Lowers pKa of active site Tyr.

It belongs to the short-chain dehydrogenases/reductases (SDR) family.

Short-chain dehydrogenase/reductase; part of the gene cluster that mediates the biosynthesis of fumigermin that inhibits germination of spores of the inducing S.rapamycinicus, and thus helps the fungus to defend resources in the shared habitat against a bacterial competitor. The partially reducing polyketide synthase fngA alone is sufficient for the production of fumigermin. FgnA catalyzes the condensation of 3 malonyl-CoA units to an acetyl-CoA starter, and 3 methylations to yield fumigermin. It is remarkable that the five cluster genes including fgnA are conserved in distantly related fungi, supporting the assumption of a fumigermin cluster; it is thus possible that originally all five genes were functional, but that the genes encoding tailoring enzymes became inactive from mutations, similar to the case of the fgnA gene in strains A1163 and Af293. The sequence is that of Short-chain dehydrogenase/reductase AFUA_1G00990 from Aspergillus fumigatus (strain ATCC MYA-4609 / CBS 101355 / FGSC A1100 / Af293) (Neosartorya fumigata).